The chain runs to 244 residues: uncharacterized protein (244 aa).

The disordered stretch occupies residues 1–127; the sequence is MSGPQGSDPR…YPGQYGPYGQ (127 aa). The span at 34-43 shows a compositional bias: polar residues; it reads WQQQPTQEAT. Low complexity-rich tracts occupy residues 45–75 and 88–127; these read QAPA…YAQP and PGQY…PYGQ. A helical membrane pass occupies residues 136-156; it reads VAVIGGVIAVMAVLFIGAVLI.

The protein localises to the membrane. This is an uncharacterized protein from Mycobacterium tuberculosis (strain CDC 1551 / Oshkosh).